A 296-amino-acid polypeptide reads, in one-letter code: Copper resistance protein B (296 aa).

The signal sequence occupies residues 1 to 23; sequence MKRNLKAIPVLVAGLFTSQLSIA.

Its subcellular location is the cell outer membrane. Its function is as follows. Required for the copper-inducible expression of copper resistance. In Escherichia coli, this protein is Copper resistance protein B (pcoB).